The chain runs to 272 residues: Orotidine 5'-phosphate decarboxylase (272 aa).

Lysine 92 (proton donor) is an active-site residue.

It belongs to the OMP decarboxylase family. Type 2 subfamily.

The catalysed reaction is orotidine 5'-phosphate + H(+) = UMP + CO2. The protein operates within pyrimidine metabolism; UMP biosynthesis via de novo pathway; UMP from orotate: step 2/2. The polypeptide is Orotidine 5'-phosphate decarboxylase (pyrF) (Deinococcus radiodurans (strain ATCC 13939 / DSM 20539 / JCM 16871 / CCUG 27074 / LMG 4051 / NBRC 15346 / NCIMB 9279 / VKM B-1422 / R1)).